Here is a 232-residue protein sequence, read N- to C-terminus: uncharacterized protein (232 aa).

The next 7 helical transmembrane spans lie at 17 to 37 (FLAKVFGLMSIGLLISAVFAY), 54 to 74 (MSFMAMILIQFGLVYAISGAL), 84 to 104 (ALFLLYSALTGVTLSSIFMIY), 107 to 127 (GSIVFTFGITAGTFLGMSVYG), 138 to 158 (GSYLIMGLWGIIIASLVNMFF), 161 to 181 (SGLNFLISILGVVIFTGLTAY), and 203 to 223 (MAVVASLKLYLDFINLFLYLL).

This sequence belongs to the BI1 family.

It localises to the cell membrane. This is an uncharacterized protein from Borreliella burgdorferi (strain ATCC 35210 / DSM 4680 / CIP 102532 / B31) (Borrelia burgdorferi).